Consider the following 411-residue polypeptide: Aspartate kinase (411 aa).

The ACT domain maps to 265-348; sequence LTIRGVPDTP…KIAKVSIVGV (84 aa).

The protein belongs to the aspartokinase family.

It is found in the cytoplasm. The catalysed reaction is L-aspartate + ATP = 4-phospho-L-aspartate + ADP. It participates in amino-acid biosynthesis; L-lysine biosynthesis via DAP pathway; (S)-tetrahydrodipicolinate from L-aspartate: step 1/4. Its pathway is amino-acid biosynthesis; L-methionine biosynthesis via de novo pathway; L-homoserine from L-aspartate: step 1/3. It functions in the pathway amino-acid biosynthesis; L-threonine biosynthesis; L-threonine from L-aspartate: step 1/5. With respect to regulation, allosterically feedback inhibited by L-lysine and L-threonine individually and also subject to a concerted feedback inhibition by these amino acids. Involved in the biosynthesis of L-aspartate-beta-semialdehyde which is a central intermediate in the biosynthesis of different amino acids (L-lysine, L-methionine, L-threonine). Catalyzes the phosphorylation of the beta-carboxyl group of L-aspartate to yield 4-phospho-L-aspartate. The protein is Aspartate kinase of Pseudomonas putida (strain ATCC 47054 / DSM 6125 / CFBP 8728 / NCIMB 11950 / KT2440).